Consider the following 3313-residue polypeptide: PHD finger protein rhinoceros (3313 aa).

Over residues 1–16 the composition is skewed to basic residues; it reads MSQRGKRGNQHHHQSH. The disordered stretch occupies residues 1 to 136; that stretch reads MSQRGKRGNQ…QGASTSSSWQ (136 aa). 2 stretches are compositionally biased toward low complexity: residues 42–71 and 100–134; these read PPNG…ATGG and LGAA…TSSS. The PHD-type 1 zinc finger occupies 323-373; that stretch reads NVICDVCRSPDSEEANEMVFCDNCNICVHQACYGITAIPSGQWLCRTCSMG. The C2HC pre-PHD-type zinc-finger motif lies at 375 to 409; that stretch reads TPDCVLCPNKAGAMKSNKSGKHWAHVSCALWIPEV. A PHD-type 2; degenerate zinc finger spans residues 433–487; that stretch reads LVCVLCRKRVGSCIQCSKHSMSKGKKENAGGASGGGSASVTSSMHKANKYATGTG. Disordered regions lie at residues 453–526, 708–1076, 1107–1842, 1961–2033, 2104–2136, 2145–2164, 2219–2252, 2353–2374, 2398–2514, 2563–2587, 2647–2679, 2827–2871, 2888–2954, 2978–2998, 3017–3077, 3144–3233, and 3259–3313; these read MSKG…ARAQ, LQSG…TKAA, KEAK…PPSH, AQKE…TMGN, PVTA…RMQR, ARRS…PPAT, AAPQ…FNGG, PAYP…PAHP, VAAK…PPPM, TTRG…LHPV, ATGT…QPPA, SCGL…SSSR, LAGA…IKIR, YEMT…YSTP, DFDK…SATT, KAEK…SLPE, and YENS…CEVR. Over residues 512–526 the composition is skewed to basic and acidic residues; it reads KNDMTSEERNQARAQ. The span at 735-749 shows a compositional bias: polar residues; that stretch reads KKLNNGAITSRTSSP. Positions 760 to 772 are enriched in low complexity; sequence STSTSTATATTAA. Polar residues predominate over residues 792–802; that stretch reads GAATGTSTHNK. Composition is skewed to low complexity over residues 803–861 and 894–912; these read TQSQ…ASGI and EAAA…ATSS. Residues 919–934 are compositionally biased toward basic and acidic residues; the sequence is QQRRRQEPERERDGRG. Over residues 942 to 955 the composition is skewed to polar residues; sequence TVPNRTQPTKSKQS. Positions 956–972 are enriched in low complexity; sequence TQADAGSGAGTGAAVET. Residues 994–1003 are compositionally biased toward acidic residues; sequence ESLSSDESEE. Residues 1015-1025 are compositionally biased toward low complexity; sequence AALSSGLAASG. Positions 1058-1072 are enriched in polar residues; it reads VESNVSDSQNQQTIR. Basic and acidic residues-rich tracts occupy residues 1159 to 1168 and 1178 to 1205; these read AADRMREPES and KLKD…KEQS. A compositionally biased stretch (low complexity) spans 1250–1266; it reads EAKSTAPAAKPTAAKTS. Over residues 1285 to 1301 the composition is skewed to polar residues; that stretch reads LKSSKPLQDTTFSTANE. Composition is skewed to low complexity over residues 1308-1324, 1377-1404, and 1451-1464; these read AATT…GVAT, SSSS…SGSD, and PAAS…AAAT. Over residues 1475–1485 the composition is skewed to polar residues; the sequence is TARTRQNSTNK. A compositionally biased stretch (basic and acidic residues) spans 1551 to 1579; it reads SPEKQTARRKSRADESPKKIPNLEHEINQ. Over residues 1638 to 1650 the composition is skewed to acidic residues; the sequence is PVVEPEVETEIEP. Residues 1667–1678 are compositionally biased toward polar residues; the sequence is TAPTHTQLSANA. The segment covering 1691–1702 has biased composition (pro residues); it reads PAAPLPASPTPT. The span at 1722–1734 shows a compositional bias: basic residues; sequence SRWRSRRRRRRRS. The stretch at 1744 to 1773 forms a coiled coil; the sequence is HTQHLLNEMEMARELEEERKNELLANASKY. The span at 1753–1765 shows a compositional bias: basic and acidic residues; sequence EMARELEEERKNE. 2 stretches are compositionally biased toward polar residues: residues 1771–1781 and 1796–1805; these read SKYSASTSSPA and DSNSANSGGD. Residues 1806-1819 show a composition bias toward low complexity; it reads QQQQQQQQPLPQQL. Polar residues predominate over residues 1823–1832; it reads SPSSEVASTI. The span at 1965 to 1984 shows a compositional bias: low complexity; it reads QQQQQQQQQQQQQQQQQQQQ. 2 stretches are compositionally biased toward polar residues: residues 1985–1999 and 2007–2018; these read SCLY…SVAS and MTANSGSYANSL. Low complexity predominate over residues 2019–2033; that stretch reads TNTPNATPTNATMGN. The span at 2106–2118 shows a compositional bias: polar residues; the sequence is TAQSGAGSNSNKL. 2 stretches are compositionally biased toward low complexity: residues 2148-2157 and 2222-2242; these read SSSPSSVSES and QQQT…QQQQ. Residues 2439-2451 show a composition bias toward pro residues; the sequence is PVQPQPPTPPAPA. Residues 2479–2488 are compositionally biased toward gly residues; sequence GSGGSGAPGR. Over residues 2658–2679 the composition is skewed to low complexity; that stretch reads PAVSAAPVAPAPAPAANSQPPA. Gly residues predominate over residues 2891–2900; sequence ASGGGAGTAS. Positions 2909–2924 are enriched in polar residues; sequence CSSGSNNDNNGKTGAA. Basic and acidic residues predominate over residues 2935 to 2946; it reads KTLESSEDDHQT. Positions 3017–3026 are enriched in basic and acidic residues; sequence DFDKGEENNK. Residues 3046–3065 show a composition bias toward basic residues; sequence KRPKSSKPKKDKKEKKRQKQ. Residues 3179-3198 show a composition bias toward polar residues; it reads TSPQGLLLNSFTPHSQNANA. Residues 3268–3290 are compositionally biased toward low complexity; the sequence is SASGTGSASSNSCNSNSNNNNNN. The segment covering 3291–3302 has biased composition (gly residues); that stretch reads GSGGGAASGGGS.

The protein belongs to the JADE family.

The protein resides in the nucleus. May function as a negative regulator of the EGFR/Ras/MAPK signaling pathway during eye development. The polypeptide is PHD finger protein rhinoceros (rno) (Drosophila pseudoobscura pseudoobscura (Fruit fly)).